We begin with the raw amino-acid sequence, 1976 residues long: DNA-directed RNA polymerase V subunit 1 (1976 aa).

The Zn(2+) site is built by Cys57, Cys60, Cys68, His71, Cys98, and Cys101. Residues Asp449, Asp451, and Asp453 each contribute to the Mg(2+) site. Residues 751–763 (PYEEMAHSIAARE) form a bridging helix region. The stretch at 1215 to 1216 (WG) is repeat 1. The 18 X 2 AA repeats of [WG]-[GW] repeats stretch occupies residues 1215–1693 (WGKRVDVGTG…AKKFPSSGGW (479 aa)). Disordered regions lie at residues 1272 to 1291 (EEEM…LGEP), 1298 to 1718 (DFQN…EDNL), and 1847 to 1976 (FTKP…QTQT). Composition is skewed to basic and acidic residues over residues 1281-1291 (SPERDSALGEP) and 1298-1307 (DFQNLHDEGK). Repeat 2 spans residues 1329 to 1330 (WG). The span at 1332–1348 (SKSTGGEANPESNWEKT) shows a compositional bias: polar residues. Residues 1349-1371 (TNVEKEDAWSSWNTRKDAQESSK) are compositionally biased toward basic and acidic residues. 15 repeat units span residues 1378 to 1379 (WG), 1415 to 1416 (WG), 1430 to 1431 (WG), 1439 to 1440 (WG), 1447 to 1448 (WG), 1464 to 1465 (WG), 1498 to 1499 (WG), 1528 to 1529 (WG), 1545 to 1546 (WG), 1562 to 1563 (WG), 1596 to 1597 (WG), 1604 to 1605 (WG), 1621 to 1622 (WG), 1638 to 1639 (WG), and 1641 to 1642 (WG). The segment covering 1415–1430 (WGHKSVSDKSWDKKNW) has biased composition (basic and acidic residues). Positions 1491–1501 (TESNGATWGSS) are enriched in polar residues. Over residues 1648–1678 (AEDKDTNEDDRNPWVSLKETKSREKDDKERS) the composition is skewed to basic and acidic residues. Repeat copies occupy residues 1680-1681 (WG) and 1692-1693 (GW). Residues 1869 to 1878 (EQSQPPNQSI) show a composition bias toward polar residues. Positions 1886–1976 (QTQTQSQSPS…SSQSPSQTQT (91 aa)) are enriched in low complexity.

The protein belongs to the RNA polymerase beta' chain family. As to quaternary structure, component of the RNA polymerase V complex. Interacts with NRPD4, NRPD2A, and (via C-terminus) with AGO4. Interacts with SUVH2. Mostly expressed in flowers, and, to a lower extent, in leaves. Present in sperm cells.

Its subcellular location is the nucleus. It is found in the nucleolus. It carries out the reaction RNA(n) + a ribonucleoside 5'-triphosphate = RNA(n+1) + diphosphate. Its function is as follows. DNA-dependent RNA polymerase catalyzes the transcription of DNA into RNA using the four ribonucleoside triphosphates as substrates. Largest and catalytic component of RNA polymerase V involved in RNA-directed DNA methylation-dependent (RdDM) silencing of endogenous repeated sequences, including transposable elements. Also required for full erasure of methylation when the RNA trigger is withdrawn. Seems also involved in the synthesis of short-interfering RNAs (siRNA). Essential component of a self-reinforcing loop coupling de novo DNA methylation to siRNA production. Involved in the maintenance of post-transcriptional RNA silencing. This Arabidopsis thaliana (Mouse-ear cress) protein is DNA-directed RNA polymerase V subunit 1 (NRPE1).